Reading from the N-terminus, the 78-residue chain is MSTIEERVKKIVAEQLGVKEEEVTNSASFVEDLGADSLDTVELVMALEEEFETEIPDEQAEKITTVQEAIDYVTAHAQ.

The Carrier domain maps to 2 to 77 (STIEERVKKI…EAIDYVTAHA (76 aa)). The residue at position 37 (S37) is an O-(pantetheine 4'-phosphoryl)serine.

The protein belongs to the acyl carrier protein (ACP) family. In terms of processing, 4'-phosphopantetheine is transferred from CoA to a specific serine of apo-ACP by AcpS. This modification is essential for activity because fatty acids are bound in thioester linkage to the sulfhydryl of the prosthetic group.

Its subcellular location is the cytoplasm. It functions in the pathway lipid metabolism; fatty acid biosynthesis. Its function is as follows. Carrier of the growing fatty acid chain in fatty acid biosynthesis. This is Acyl carrier protein from Ectopseudomonas mendocina (strain ymp) (Pseudomonas mendocina).